The following is a 456-amino-acid chain: MNSQITNAKTREWQALSRDHHLPPFTDYKQLNEKGARIITKAEGVYIWDSEGNKILDAMAGLWCVNVGYGREELVQAATRQMRELPFYNLFFQTAHPPVVELAKAIADVAPEGMNHVFFTGSGSEANDTVLRMVRHYWATKGQPQKKVVIGRWNGYHGSTVAGVSLGGMKALHEQGDFPIPGIVHIAQPYWYGEGGDMSPDEFGVWAAEQLEKKILEVGEENVAAFIAEPIQGAGGVIVPPDTYWPKIREILAKYDILFIADEVICGFGRTGEWFGSQYYGNAPDLMPIAKGLTSGYIPMGGVVVRDEIVEVLNQGGEFYHGFTYSGHPVAAAVALENIRILREEKIIEKVKAETAPYLQKRWQELADHPLVGEARGVGMVAALELVKNKKTRERFTDKGVGMLCREHCFRNGLIMRAVGDTMIISPPLVIDPSQIDELITLARKCLDQTAAAVLA.

Substrate is bound at residue Tyr-156. Asp-262 provides a ligand contact to pyridoxal 5'-phosphate. Position 291 is an N6-(pyridoxal phosphate)lysine (Lys-291). Positions 322 and 417 each coordinate substrate.

The protein belongs to the class-III pyridoxal-phosphate-dependent aminotransferase family. Requires pyridoxal 5'-phosphate as cofactor.

It carries out the reaction putrescine + pyruvate = 4-aminobutanal + L-alanine. It functions in the pathway amine and polyamine degradation; putrescine degradation; 4-aminobutanal from putrescine (transaminase route). Functionally, involved in the putrescine catabolism. Catalyzes the transfer of the amino group from putrescine to pyruvate to yield 4-aminobutanal and alanine. This chain is Putrescine--pyruvate aminotransferase, found in Pseudomonas aeruginosa (strain ATCC 15692 / DSM 22644 / CIP 104116 / JCM 14847 / LMG 12228 / 1C / PRS 101 / PAO1).